The sequence spans 370 residues: uncharacterized protein (370 aa).

The first 27 residues, 1–27 (MSSAANEGCVYLFIVVLRLSSFSCVNS), serve as a signal peptide directing secretion. Asn59, Asn98, and Asn126 each carry an N-linked (GlcNAc...) asparagine glycan. Disordered regions lie at residues 81–101 (SRSH…NTTA) and 123–167 (LSEN…CHQP). Acidic residues predominate over residues 139-148 (HDDDDDDDLE). 4 N-linked (GlcNAc...) asparagine glycosylation sites follow: Asn171, Asn221, Asn230, and Asn262.

This is an uncharacterized protein from Saccharomyces cerevisiae (strain ATCC 204508 / S288c) (Baker's yeast).